We begin with the raw amino-acid sequence, 225 residues long: Probable methylthioribulose-1-phosphate dehydratase (225 aa).

Cys-86 is a binding site for substrate. Positions 104 and 106 each coordinate Zn(2+). Glu-127 acts as the Proton donor/acceptor in catalysis. His-183 provides a ligand contact to Zn(2+).

Belongs to the aldolase class II family. MtnB subfamily. Zn(2+) serves as cofactor.

The protein resides in the cytoplasm. The enzyme catalyses 5-(methylsulfanyl)-D-ribulose 1-phosphate = 5-methylsulfanyl-2,3-dioxopentyl phosphate + H2O. It participates in amino-acid biosynthesis; L-methionine biosynthesis via salvage pathway; L-methionine from S-methyl-5-thio-alpha-D-ribose 1-phosphate: step 2/6. Catalyzes the dehydration of methylthioribulose-1-phosphate (MTRu-1-P) into 2,3-diketo-5-methylthiopentyl-1-phosphate (DK-MTP-1-P). The chain is Probable methylthioribulose-1-phosphate dehydratase from Leishmania infantum.